The following is a 1054-amino-acid chain: Reverse gyrase (1054 aa).

The segment at 1 to 43 (MIPVVYSNLCPVCGGDLESKEIEKHVCFRKKRSLCLFPEDFLL) adopts an RG N-terminal-type zinc-finger fold. Zn(2+) contacts are provided by Cys10, Cys13, Cys27, and Cys35. Cysteines 35 and 650 form a disulfide. Residues Gln61, Lys84, Thr85, and Ser86 each contribute to the ATP site. The Helicase ATP-binding domain occupies 65–245 (AKRILRKESF…FRQLLNFDIG (181 aa)). The short motif at 182-185 (DDVD) is the DEAD box element. A latch region region spans residues 352–427 (PSFRVTIEDI…EGEVIFPDLR (76 aa)). Positions 502–1054 (DLIKPALFIV…DLYAEIKSID (553 aa)) are topoisomerase I. A Toprim domain is found at 506-662 (PALFIVESPT…VKRAEFHEVT (157 aa)). Glu512 is a binding site for Mg(2+). The segment at 581 to 609 (IKRCRDCGYQFTEDRESCPKCGSENVDNS) adopts an RG C-terminal-type zinc-finger fold. Positions 584, 587, 598, and 601 each coordinate Zn(2+). Asp631 is a Mg(2+) binding site. One can recognise a Topo IA-type catalytic domain in the interval 677 to 1054 (DENLVKAQVV…DLYAEIKSID (378 aa)). Tyr809 acts as the O-(5'-phospho-DNA)-tyrosine intermediate in catalysis.

The protein in the N-terminal section; belongs to the DEAD box helicase family. DDVD subfamily. In the C-terminal section; belongs to the type IA topoisomerase family. In terms of assembly, monomer. Requires Zn(2+) as cofactor. Mg(2+) serves as cofactor.

Its subcellular location is the cytoplasm. The catalysed reaction is ATP + H2O = ADP + phosphate + H(+). In terms of biological role, modifies the topological state of DNA by introducing positive supercoils in an ATP-dependent process, increasing the linking number in steps of +1. Very efficient supercoiling occurs on relaxed DNA with a single-stranded bubble; the minimal bubble is 20 nucleotides (nt) and up to 10 positive supercoils can be introduced into a 3.1 kb plasmid with a 50 nt bubble. Positively supercoils DNA with all (d)NTPS, although it requires about 10-fold more of non-(d)ATP. In the absence of ATP (or at low levels of enzyme), or in the presence of ADP, relaxes negative supercoils. Only relaxes positive supercoils when the substrate contains a bubble. Also promotes strand annealing of complementary ssDNA circles. Binds to single-stranded DNA, transiently cleaves and then rejoins the ends, introducing a positive supercoil in the process. The scissile phosphodiester is attacked by the catalytic tyrosine of the enzyme, resulting in the formation of a DNA-(5'-phosphotyrosyl)-enzyme intermediate. Probably involved in rewinding DNA strands in regions of the chromosome that have opened up to allow replication, transcription, DNA repair and/or for DNA protection. Its function is as follows. In vitro protects DNA against degradation at 90 degrees Celsius, reducing dsDNA breakage about 8-fold; ATP hydrolysis is not necessary, while ADP decreases the protection somewhat. Coats all forms of dsDNA; the DNA is protected against cleavage and transcription. Recognizes nicked DNA and forms a coat at the nicking site, which may help hold DNA in a structure amenable to repair. This is Reverse gyrase from Archaeoglobus fulgidus (strain ATCC 49558 / DSM 4304 / JCM 9628 / NBRC 100126 / VC-16).